A 548-amino-acid polypeptide reads, in one-letter code: Probable malate:quinone oxidoreductase (548 aa).

Positions 522 to 548 are disordered; that stretch reads KPQAADSTPKAQLKPQPARKEVADIAL. Over residues 539 to 548 the composition is skewed to basic and acidic residues; the sequence is ARKEVADIAL.

This sequence belongs to the MQO family. Requires FAD as cofactor.

It carries out the reaction (S)-malate + a quinone = a quinol + oxaloacetate. The protein operates within carbohydrate metabolism; tricarboxylic acid cycle; oxaloacetate from (S)-malate (quinone route): step 1/1. The sequence is that of Probable malate:quinone oxidoreductase from Escherichia fergusonii (strain ATCC 35469 / DSM 13698 / CCUG 18766 / IAM 14443 / JCM 21226 / LMG 7866 / NBRC 102419 / NCTC 12128 / CDC 0568-73).